We begin with the raw amino-acid sequence, 69 residues long: DNA-directed RNA polymerase subunit omega (69 aa).

It belongs to the RNA polymerase subunit omega family. The RNAP catalytic core consists of 2 alpha, 1 beta, 1 beta' and 1 omega subunit. When a sigma factor is associated with the core the holoenzyme is formed, which can initiate transcription.

The catalysed reaction is RNA(n) + a ribonucleoside 5'-triphosphate = RNA(n+1) + diphosphate. Its function is as follows. Promotes RNA polymerase assembly. Latches the N- and C-terminal regions of the beta' subunit thereby facilitating its interaction with the beta and alpha subunits. The sequence is that of DNA-directed RNA polymerase subunit omega from Pelotomaculum thermopropionicum (strain DSM 13744 / JCM 10971 / SI).